The following is a 92-amino-acid chain: Small ribosomal subunit protein uS19 (92 aa).

Belongs to the universal ribosomal protein uS19 family.

Functionally, protein S19 forms a complex with S13 that binds strongly to the 16S ribosomal RNA. This Sulfurovum sp. (strain NBC37-1) protein is Small ribosomal subunit protein uS19.